Reading from the N-terminus, the 316-residue chain is Exonuclease DPD1, chloroplastic/mitochondrial (316 aa).

The N-terminal 63 residues, 1 to 63 (MCISISQVSR…NVSTTTQGSR (63 aa)), are a transit peptide targeting the chloroplast and mitochondrion. The Exonuclease domain occupies 112 to 282 (IVSDLETTGL…SDVLLLSKVF (171 aa)). Mg(2+) is bound by residues aspartate 115 and glutamate 117. The Proton donor/acceptor role is filled by histidine 269. Position 274 (aspartate 274) interacts with Mg(2+).

It belongs to the exonuclease superfamily. TREX family. Mg(2+) is required as a cofactor. Highly expressed in mature pollen grains. Detected in flowers, senescing leaves and roots.

It localises to the plastid. It is found in the chloroplast. The protein localises to the mitochondrion. Inhibited by free nucleotide diphosphates (NDPs). Functionally, exonuclease required for organelle DNA degradation during pollen development. Plays non-essential roles in maternal inheritance. May be part of the DNA salvage machinery. The chain is Exonuclease DPD1, chloroplastic/mitochondrial from Arabidopsis thaliana (Mouse-ear cress).